The chain runs to 162 residues: MARVYILFFSVFFVFPLFSEDAARDVEPSDAPVPYEDTEFSLWQKELYRFEALSIGAFPIVTLLSFITYDIIRLIQQWSTKPPTWWALIIPGAELPPLSTKERAIVFGVAVGISVTIGLIDVTYRAVKRAIHRRSLERSQLVPDPIELVPLDSFVEGTDDST.

An N-terminal signal peptide occupies residues 1 to 19 (MARVYILFFSVFFVFPLFS). The next 2 membrane-spanning stretches (helical) occupy residues 53 to 75 (LSIG…IRLI) and 105 to 127 (IVFG…YRAV).

The protein localises to the cell membrane. This is an uncharacterized protein from Treponema pallidum (strain Nichols).